Consider the following 386-residue polypeptide: Putrescine N-methyltransferase 4 (386 aa).

Composition is skewed to polar residues over residues 1 to 14 (MEVISTNTNGSTIF), 23 to 48 (GHQSGTSKHLNGYQNGTSKHQNGHHN), and 57 to 87 (HQNGISEHQNGHQNGTSEQQNGTISHDNGNE). Positions 1–87 (MEVISTNTNG…GTISHDNGNE (87 aa)) are disordered. The PABS domain maps to 97-334 (LGWFSEFSAL…GVIGYMLCST (238 aa)). Residues glutamine 128, glutamate 203, and 234–235 (DG) contribute to the S-adenosyl-L-methionine site. Aspartate 253 serves as the catalytic Proton acceptor. Tyrosine 322 contacts S-adenosyl-L-methionine.

The protein belongs to the class I-like SAM-binding methyltransferase superfamily. Putrescine methyltransferase family. In terms of tissue distribution, predominantly expressed in roots.

It catalyses the reaction putrescine + S-adenosyl-L-methionine = N-methylputrescine + S-adenosyl-L-homocysteine + H(+). Its pathway is alkaloid biosynthesis; nicotine biosynthesis. Its function is as follows. Involved in the biosynthesis of pyridine alkaloid natural products, leading mainly to the production of anabasine, anatabine, nicotine and nornicotine, effective deterrents against herbivores with antiparasitic and pesticide properties (neurotoxins); nornicotine serves as the precursor in the synthesis of the carcinogen compound N'-nitrosonornicotine (NNN). Methyltransferase that mediates the conversion of putrescine to N-methylputrescine. Promotes leaves ripening. The polypeptide is Putrescine N-methyltransferase 4 (Nicotiana tabacum (Common tobacco)).